Consider the following 52-residue polypeptide: Large ribosomal subunit protein eL39 (52 aa).

Belongs to the eukaryotic ribosomal protein eL39 family. In terms of assembly, interacts with YIH1.

In Encephalitozoon cuniculi (strain GB-M1) (Microsporidian parasite), this protein is Large ribosomal subunit protein eL39 (RPL39).